A 416-amino-acid polypeptide reads, in one-letter code: Tryptophan synthase beta chain (416 aa).

Lys-109 carries the post-translational modification N6-(pyridoxal phosphate)lysine.

It belongs to the TrpB family. Tetramer of two alpha and two beta chains. Requires pyridoxal 5'-phosphate as cofactor.

The catalysed reaction is (1S,2R)-1-C-(indol-3-yl)glycerol 3-phosphate + L-serine = D-glyceraldehyde 3-phosphate + L-tryptophan + H2O. It participates in amino-acid biosynthesis; L-tryptophan biosynthesis; L-tryptophan from chorismate: step 5/5. The beta subunit is responsible for the synthesis of L-tryptophan from indole and L-serine. The polypeptide is Tryptophan synthase beta chain (Prochlorococcus marinus (strain SARG / CCMP1375 / SS120)).